The sequence spans 220 residues: DNA replication complex GINS protein SLD5 (220 aa).

Belongs to the GINS4/SLD5 family. As to quaternary structure, component of the GINS complex. Interacts with EOL1 in the nucleus.

Its subcellular location is the nucleus. Its function is as follows. The GINS complex plays an essential role in the initiation of DNA replication. Required during embryogenesis. The protein is DNA replication complex GINS protein SLD5 of Arabidopsis thaliana (Mouse-ear cress).